The sequence spans 194 residues: Protein GrpE (194 aa).

The protein belongs to the GrpE family. As to quaternary structure, homodimer.

The protein resides in the cytoplasm. Functionally, participates actively in the response to hyperosmotic and heat shock by preventing the aggregation of stress-denatured proteins, in association with DnaK and GrpE. It is the nucleotide exchange factor for DnaK and may function as a thermosensor. Unfolded proteins bind initially to DnaJ; upon interaction with the DnaJ-bound protein, DnaK hydrolyzes its bound ATP, resulting in the formation of a stable complex. GrpE releases ADP from DnaK; ATP binding to DnaK triggers the release of the substrate protein, thus completing the reaction cycle. Several rounds of ATP-dependent interactions between DnaJ, DnaK and GrpE are required for fully efficient folding. The polypeptide is Protein GrpE (Aliivibrio fischeri (strain ATCC 700601 / ES114) (Vibrio fischeri)).